The chain runs to 121 residues: Urotensin-2 (121 aa).

Positions 1–19 are cleaved as a signal peptide; the sequence is MSKLVPCLLLLGCLGLLFA. The propeptide occupies 20-106; it reads LPVPDSRKEP…HLLARIKKPY (87 aa). Cys115 and Cys120 form a disulfide bridge.

It belongs to the urotensin-2 family.

The protein resides in the secreted. Its function is as follows. Highly potent vasoconstrictor. The sequence is that of Urotensin-2 (UTS2) from Sus scrofa (Pig).